An 84-amino-acid chain; its full sequence is Small ribosomal subunit protein bS16c (84 aa).

This sequence belongs to the bacterial ribosomal protein bS16 family.

It is found in the plastid. The protein resides in the chloroplast. The chain is Small ribosomal subunit protein bS16c from Anthoceros angustus (Hornwort).